Consider the following 417-residue polypeptide: Protein translocase subunit SecD (417 aa).

Helical transmembrane passes span 9 to 29 (LLVSVLAIVIAFAVFIKPLVS), 236 to 256 (ASMKAFAIGLAGVFLFMLLYY), 258 to 278 (LSGLVADIVLLLYTLLLLAVM), 288 to 308 (PGMAGIILSIGMAVDANVLIF), 333 to 353 (FTTILDSNVTTLMAAAVLFYL), and 360 to 380 (GFAVTLALGVLISMFTAVTVT).

The protein belongs to the SecD/SecF family. SecD subfamily. In terms of assembly, forms a complex with SecF. Part of the essential Sec protein translocation apparatus which comprises SecA, SecYEG and auxiliary proteins SecDF. Other proteins may also be involved.

It localises to the cell membrane. In terms of biological role, part of the Sec protein translocase complex. Interacts with the SecYEG preprotein conducting channel. SecDF uses the proton motive force (PMF) to complete protein translocation after the ATP-dependent function of SecA. This Acidaminococcus fermentans (strain ATCC 25085 / DSM 20731 / CCUG 9996 / CIP 106432 / VR4) protein is Protein translocase subunit SecD.